Here is a 165-residue protein sequence, read N- to C-terminus: uncharacterized protein (165 aa).

This is an uncharacterized protein from Homo sapiens (Human).